The primary structure comprises 355 residues: D-alanine--D-alanine ligase (355 aa).

Residues 143 to 350 (KTIFSNLKIP…IEQLVAKLVD (208 aa)) form the ATP-grasp domain. 178–233 (IKKLNFPVFVKPSNSGSSLGISKVINKSALLKALEKAWEIDARILVEEGLETREIE) provides a ligand contact to ATP. Positions 303, 317, and 319 each coordinate Mg(2+).

Belongs to the D-alanine--D-alanine ligase family. Requires Mg(2+) as cofactor. The cofactor is Mn(2+).

The protein resides in the cytoplasm. It carries out the reaction 2 D-alanine + ATP = D-alanyl-D-alanine + ADP + phosphate + H(+). It functions in the pathway cell wall biogenesis; peptidoglycan biosynthesis. Its function is as follows. Cell wall formation. The chain is D-alanine--D-alanine ligase from Prochlorococcus marinus (strain MIT 9312).